Reading from the N-terminus, the 495-residue chain is 3-octaprenyl-4-hydroxybenzoate carboxy-lyase (495 aa).

Residue asparagine 172 participates in Mn(2+) binding. Prenylated FMN contacts are provided by residues 175 to 177 (IYR), 189 to 191 (RWL), and 194 to 195 (RG). Glutamate 238 is a Mn(2+) binding site. The Proton donor role is filled by aspartate 287.

This sequence belongs to the UbiD family. In terms of assembly, homohexamer. Prenylated FMN is required as a cofactor. Mn(2+) serves as cofactor.

It localises to the cell membrane. The catalysed reaction is a 4-hydroxy-3-(all-trans-polyprenyl)benzoate + H(+) = a 2-(all-trans-polyprenyl)phenol + CO2. It participates in cofactor biosynthesis; ubiquinone biosynthesis. Its function is as follows. Catalyzes the decarboxylation of 3-octaprenyl-4-hydroxy benzoate to 2-octaprenylphenol, an intermediate step in ubiquinone biosynthesis. This chain is 3-octaprenyl-4-hydroxybenzoate carboxy-lyase, found in Yersinia pseudotuberculosis serotype O:1b (strain IP 31758).